Consider the following 467-residue polypeptide: Fumarate hydratase class II (467 aa).

Substrate-binding positions include 98-100 (SGT), Arg-126, 129-132 (HPND), 139-141 (SSN), and Thr-187. The active-site Proton donor/acceptor is His-188. Ser-318 is a catalytic residue. Residues Ser-319 and 324-326 (KVN) each bind substrate.

It belongs to the class-II fumarase/aspartase family. Fumarase subfamily. As to quaternary structure, homotetramer.

Its subcellular location is the cytoplasm. It carries out the reaction (S)-malate = fumarate + H2O. The protein operates within carbohydrate metabolism; tricarboxylic acid cycle; (S)-malate from fumarate: step 1/1. Functionally, involved in the TCA cycle. Catalyzes the stereospecific interconversion of fumarate to L-malate. The protein is Fumarate hydratase class II of Salmonella typhimurium (strain LT2 / SGSC1412 / ATCC 700720).